The chain runs to 400 residues: Elongation factor Tu-B (400 aa).

One can recognise a tr-type G domain in the interval 10-209 (KPHVNVGTIG…VVDEYIPTPE (200 aa)). The interval 19–26 (GHVDHGKT) is G1. Position 19-26 (19-26 (GHVDHGKT)) interacts with GTP. Residue T26 participates in Mg(2+) binding. The tract at residues 60–64 (GITIN) is G2. Positions 81 to 84 (DCPG) are G3. GTP contacts are provided by residues 81–85 (DCPGH) and 136–139 (NKAD). Residues 136–139 (NKAD) form a G4 region. The tract at residues 174–176 (SAL) is G5.

The protein belongs to the TRAFAC class translation factor GTPase superfamily. Classic translation factor GTPase family. EF-Tu/EF-1A subfamily. Monomer.

It is found in the cytoplasm. The enzyme catalyses GTP + H2O = GDP + phosphate + H(+). Its function is as follows. GTP hydrolase that promotes the GTP-dependent binding of aminoacyl-tRNA to the A-site of ribosomes during protein biosynthesis. In Caldanaerobacter subterraneus subsp. tengcongensis (strain DSM 15242 / JCM 11007 / NBRC 100824 / MB4) (Thermoanaerobacter tengcongensis), this protein is Elongation factor Tu-B.